A 243-amino-acid polypeptide reads, in one-letter code: 4-hydroxy-tetrahydrodipicolinate reductase (243 aa).

Residues 9–14, 78–80, and 104–107 contribute to the NAD(+) site; these read GANGKM, GTS, and APNF. The active-site Proton donor/acceptor is His-134. His-135 serves as a coordination point for (S)-2,3,4,5-tetrahydrodipicolinate. Lys-138 acts as the Proton donor in catalysis. 144 to 145 lines the (S)-2,3,4,5-tetrahydrodipicolinate pocket; that stretch reads GT.

This sequence belongs to the DapB family.

The protein localises to the cytoplasm. The catalysed reaction is (S)-2,3,4,5-tetrahydrodipicolinate + NAD(+) + H2O = (2S,4S)-4-hydroxy-2,3,4,5-tetrahydrodipicolinate + NADH + H(+). The enzyme catalyses (S)-2,3,4,5-tetrahydrodipicolinate + NADP(+) + H2O = (2S,4S)-4-hydroxy-2,3,4,5-tetrahydrodipicolinate + NADPH + H(+). It functions in the pathway amino-acid biosynthesis; L-lysine biosynthesis via DAP pathway; (S)-tetrahydrodipicolinate from L-aspartate: step 4/4. In terms of biological role, catalyzes the conversion of 4-hydroxy-tetrahydrodipicolinate (HTPA) to tetrahydrodipicolinate. This chain is 4-hydroxy-tetrahydrodipicolinate reductase, found in Legionella pneumophila (strain Lens).